The primary structure comprises 487 residues: N-succinylglutamate 5-semialdehyde dehydrogenase (487 aa).

221–226 (GSSDTG) contributes to the NAD(+) binding site. Residues glutamate 244 and cysteine 278 contribute to the active site.

It belongs to the aldehyde dehydrogenase family. AstD subfamily.

It carries out the reaction N-succinyl-L-glutamate 5-semialdehyde + NAD(+) + H2O = N-succinyl-L-glutamate + NADH + 2 H(+). It functions in the pathway amino-acid degradation; L-arginine degradation via AST pathway; L-glutamate and succinate from L-arginine: step 4/5. Functionally, catalyzes the NAD-dependent reduction of succinylglutamate semialdehyde into succinylglutamate. The polypeptide is N-succinylglutamate 5-semialdehyde dehydrogenase (Burkholderia lata (strain ATCC 17760 / DSM 23089 / LMG 22485 / NCIMB 9086 / R18194 / 383)).